The chain runs to 555 residues: Dihydroxy-acid dehydratase (555 aa).

Position 78 (Asp78) interacts with Mg(2+). Cys119 provides a ligand contact to [2Fe-2S] cluster. Positions 120 and 121 each coordinate Mg(2+). Lys121 carries the N6-carboxylysine modification. Cys192 provides a ligand contact to [2Fe-2S] cluster. Glu444 provides a ligand contact to Mg(2+). Ser470 (proton acceptor) is an active-site residue.

This sequence belongs to the IlvD/Edd family. As to quaternary structure, homodimer. It depends on [2Fe-2S] cluster as a cofactor. Mg(2+) is required as a cofactor.

It catalyses the reaction (2R)-2,3-dihydroxy-3-methylbutanoate = 3-methyl-2-oxobutanoate + H2O. The enzyme catalyses (2R,3R)-2,3-dihydroxy-3-methylpentanoate = (S)-3-methyl-2-oxopentanoate + H2O. The protein operates within amino-acid biosynthesis; L-isoleucine biosynthesis; L-isoleucine from 2-oxobutanoate: step 3/4. It functions in the pathway amino-acid biosynthesis; L-valine biosynthesis; L-valine from pyruvate: step 3/4. Its function is as follows. Functions in the biosynthesis of branched-chain amino acids. Catalyzes the dehydration of (2R,3R)-2,3-dihydroxy-3-methylpentanoate (2,3-dihydroxy-3-methylvalerate) into 2-oxo-3-methylpentanoate (2-oxo-3-methylvalerate) and of (2R)-2,3-dihydroxy-3-methylbutanoate (2,3-dihydroxyisovalerate) into 2-oxo-3-methylbutanoate (2-oxoisovalerate), the penultimate precursor to L-isoleucine and L-valine, respectively. This is Dihydroxy-acid dehydratase from Halalkalibacterium halodurans (strain ATCC BAA-125 / DSM 18197 / FERM 7344 / JCM 9153 / C-125) (Bacillus halodurans).